We begin with the raw amino-acid sequence, 570 residues long: Ferroportin (570 aa).

Residues 1 to 23 (MTKSRDQTHQEGCCGSLANYLTS) lie on the Cytoplasmic side of the membrane. The chain crosses the membrane as a helical span at residues 24–53 (AKFLLYLGHSLSTWGDRMWHFAVSVFLVEL). Positions 39 and 43 each coordinate Fe cation. At 54–57 (YGNS) the chain is on the extracellular side. A helical transmembrane segment spans residues 58-84 (LLLTAVYGLVVAGSVLVLGAIIGDWVD). The Cytoplasmic segment spans residues 85–87 (KNA). The helical transmembrane segment at 88 to 118 (RLKVAQTSLVVQNVSVILCGIILMMVFLHKN) threads the bilayer. The Extracellular portion of the chain corresponds to 119 to 126 (ELLNMYHG). Residues 127 to 162 (WVLTVCYILIITIANIANLASTATAITIQRDWIVVV) traverse the membrane as a helical segment. At 163 to 164 (AG) the chain is on the cytoplasmic side. The chain crosses the membrane as a helical span at residues 165-195 (ENRSRLADMNATIRRIDQLTNILAPMAVGQI). Residues 196–202 (MTFGSPV) are Extracellular-facing. Residues 203–229 (IGCGFISGWNLVSMCVEYFLLWKVYQK) form a helical membrane-spanning segment. Residues 230 to 306 (TPALAVKAAL…DGWVSYYNQP (77 aa)) are Cytoplasmic-facing. Residues 307–333 (VFLAGMGLAFLYMTVLGFDCITTGYAY) form a helical membrane-spanning segment. Cysteine 326 provides a ligand contact to Fe cation. Residues 334–338 (TQGLS) are Extracellular-facing. The helical transmembrane segment at 339 to 366 (GSILSVLMGASAITGIMGTVAFTWLRRK) threads the bilayer. Residues 367–368 (CG) are Cytoplasmic-facing. Residues 369 to 391 (LVRTGLFSGLAQLSCLILCVISV) form a helical membrane-spanning segment. The Extracellular segment spans residues 392 to 452 (FMPGSPLDLS…EMSTKSVPII (61 aa)). The helical transmembrane segment at 453 to 482 (SVSLLFAGVIAARIGLWSFDLTVTQLLQEN) threads the bilayer. The Cytoplasmic segment spans residues 483–487 (VIESE). Residues 488 to 512 (RGIINGVQNSMNYLLDLLHFIMVIL) traverse the membrane as a helical segment. A Fe cation-binding site is contributed by histidine 506. At 513–515 (APN) the chain is on the extracellular side. The chain crosses the membrane as a helical span at residues 516 to 541 (PEAFGLLVLISVSFVAMGHLMYFRFA). At 542 to 570 (QKTLGNQIFVCAPDEKEVTDESQPNTSVV) the chain is on the cytoplasmic side.

Belongs to the ferroportin (FP) (TC 2.A.100) family. SLC40A subfamily. In terms of assembly, identified in a complex with STOM. Interacts with HAMP; affinity of the peptide hormone HAMP for SLC40A1 increases by 80-fold in the presence of iron and the interaction promotes SLC40A1 ubiquitination and degradation. Part of a complex composed of SLC40A1/ferroportin, TF/transferrin and HEPH/hephaestin that transfers iron from cells to transferrin. Polyubiquitinated by RNF217; leading to proteasomal degradation. Under conditions of high systemic iron levels, both the hormone peptide hepcidin/HAMP and holo(iron bound)-transferrin/TF induce the ubiquitination, internalization and proteasomal degradation of SLC40A1 to control iron release from cells.

Its subcellular location is the cell membrane. It localises to the basolateral cell membrane. It carries out the reaction Fe(2+)(in) = Fe(2+)(out). Its activity is regulated as follows. During elevated serum iron levels, liver-derived hepcidin/HAMP negatively regulates cell surface SLC40A1 by inducing its ubiquitination, internalization, and degradation. Indeed, hepcidin/HAMP affinity towards ferroportin/SLC40A1 increases by 80-fold in the presence of iron. Functionally, transports Fe(2+) from the inside of a cell to the outside of the cell, playing a key role for maintaining systemic iron homeostasis. Transports iron from intestinal, splenic, hepatic cells, macrophages and erythrocytes into the blood to provide iron to other tissues. Controls therefore dietary iron uptake, iron recycling by macrophages and erythrocytes, and release of iron stores in hepatocytes. When iron is in excess in serum, circulating HAMP/hepcidin levels increase resulting in a degradation of SLC40A1, thus limiting the iron efflux to plasma. This Rattus norvegicus (Rat) protein is Ferroportin.